The primary structure comprises 202 residues: MVVTAPVLPTLKTRTAPLSTLLSLTNFSTSGVMSAMSPKPSSSTSISLIIILPPYEVKLRTFIVYNSRLHVVPVEGLDEAVRTNFPRNLDYCGKKLRWWAEGVDERGPFIYFEVGLCHVVNVKSATLRSSPLNNIRCENLKAPPRQKLGYRSKSPYSHLHDLTSVVFCYVVGNLQHEQFLYLRGAIKFCADGDNQGLHAQGL.

This is an uncharacterized protein from Archaeoglobus fulgidus (strain ATCC 49558 / DSM 4304 / JCM 9628 / NBRC 100126 / VC-16).